The sequence spans 359 residues: tRNA-specific 2-thiouridylase MnmA (359 aa).

ATP is bound by residues 9–16 (GISGGVDS) and M35. The interaction with target base in tRNA stretch occupies residues 95-97 (NPD). C100 (nucleophile) is an active-site residue. An intrachain disulfide couples C100 to C197. G124 contributes to the ATP binding site. The interaction with tRNA stretch occupies residues 147–149 (KDQ). C197 (cysteine persulfide intermediate) is an active-site residue. The segment at 309-310 (RY) is interaction with tRNA.

Belongs to the MnmA/TRMU family.

Its subcellular location is the cytoplasm. It carries out the reaction S-sulfanyl-L-cysteinyl-[protein] + uridine(34) in tRNA + AH2 + ATP = 2-thiouridine(34) in tRNA + L-cysteinyl-[protein] + A + AMP + diphosphate + H(+). In terms of biological role, catalyzes the 2-thiolation of uridine at the wobble position (U34) of tRNA, leading to the formation of s(2)U34. In Francisella tularensis subsp. tularensis (strain WY96-3418), this protein is tRNA-specific 2-thiouridylase MnmA.